A 223-amino-acid polypeptide reads, in one-letter code: UPF0758 protein Plut_0598 (223 aa).

An MPN domain is found at 100–222; sequence RVQGAKDVFE…WFSFRESNLL (123 aa). Zn(2+) contacts are provided by His171, His173, and Asp184. The JAMM motif signature appears at 171–184; that stretch reads HNHPSGDTEPSNAD.

Belongs to the UPF0758 family.

This is UPF0758 protein Plut_0598 from Chlorobium luteolum (strain DSM 273 / BCRC 81028 / 2530) (Pelodictyon luteolum).